Consider the following 525-residue polypeptide: GMP synthase [glutamine-hydrolyzing] (525 aa).

Positions 8 to 207 constitute a Glutamine amidotransferase type-1 domain; sequence KILILDFGSQ…ALDICGCAAN (200 aa). The active-site Nucleophile is the C85. Active-site residues include H181 and E183. The GMPS ATP-PPase domain maps to 208–400; it reads WKPSSIIEDA…LGLPYNMLYR (193 aa). 235-241 is an ATP binding site; that stretch reads SGGVDSS.

Homodimer.

It catalyses the reaction XMP + L-glutamine + ATP + H2O = GMP + L-glutamate + AMP + diphosphate + 2 H(+). Its pathway is purine metabolism; GMP biosynthesis; GMP from XMP (L-Gln route): step 1/1. Its function is as follows. Catalyzes the synthesis of GMP from XMP. This is GMP synthase [glutamine-hydrolyzing] from Shewanella oneidensis (strain ATCC 700550 / JCM 31522 / CIP 106686 / LMG 19005 / NCIMB 14063 / MR-1).